Consider the following 137-residue polypeptide: 2-iminobutanoate/2-iminopropanoate deaminase (137 aa).

Serine 2 bears the N-acetylserine mark. An N6-succinyllysine mark is found at lysine 13 and lysine 67. Threonine 74 carries the post-translational modification Phosphothreonine. Serine 136 bears the Phosphoserine mark.

It belongs to the RutC family. In terms of assembly, homotrimer. Interacts with YTHDF2.

It localises to the cytoplasm. The protein localises to the nucleus. Its subcellular location is the peroxisome. It is found in the mitochondrion. It carries out the reaction 2-iminobutanoate + H2O = 2-oxobutanoate + NH4(+). The enzyme catalyses 2-iminopropanoate + H2O = pyruvate + NH4(+). Its function is as follows. Catalyzes the hydrolytic deamination of enamine/imine intermediates that form during the course of normal metabolism. May facilitate the release of ammonia from these potentially toxic reactive metabolites, reducing their impact on cellular components. It may act on enamine/imine intermediates formed by several types of pyridoxal-5'-phosphate-dependent dehydratases including L-threonine dehydratase. Also promotes endoribonucleolytic cleavage of some transcripts by promoting recruitment of the ribonuclease P/MRP complex. Acts by bridging YTHDF2 and the ribonuclease P/MRP complex. RIDA/HRSP12 binds to N6-methyladenosine (m6A)-containing mRNAs containing a 5'-GGUUC-3' motif: cooperative binding of RIDA/HRSP12 and YTHDF2 to such transcripts lead to recruitment of the ribonuclease P/MRP complex and subsequent endoribonucleolytic cleavage. The protein is 2-iminobutanoate/2-iminopropanoate deaminase of Bos taurus (Bovine).